Here is a 278-residue protein sequence, read N- to C-terminus: Probable endonuclease LCL3 (278 aa).

A helical transmembrane segment spans residues 15-37; that stretch reads FSSDVVLLSLLISGSTLGAIAGY. A TNase-like domain is found at 58–263; it reads RWMYGKVTAV…KAKKRGLWRQ (206 aa). The active site involves Arg-154. Asp-159 serves as a coordination point for Ca(2+). Catalysis depends on residues Glu-162 and Arg-202.

Belongs to the LCL3 family.

It localises to the mitochondrion. The protein localises to the membrane. This is Probable endonuclease LCL3 (LCL3) from Vanderwaltozyma polyspora (strain ATCC 22028 / DSM 70294 / BCRC 21397 / CBS 2163 / NBRC 10782 / NRRL Y-8283 / UCD 57-17) (Kluyveromyces polysporus).